The sequence spans 562 residues: MEKIWFQNYPKGSEKFLDTSKYESILDMFDKAVREHPDRPAYINMGQVLTFRKLEERSRAFAAYLQNEFKLQRGDRVALMMPNLLQYPIALFGILRAGLIAVNVNPLYTPRELELQLQDSGAVAIVVVSNFASTLEKVVFNTNVKHVILTRMGDQLSFGKRTLVNFVVKYVKKLVPKYKLPHAVTFREVLSIGKYRQYVRPEISREDLAFLQYTGGTTGVAKGAMLTHGNIITNVFQAKWIAEPFIGDHSRTRSAILALPLYHVFALTVNCLLFLELGVTAILITNPRDIEGFVKELKKYRFEAITGVNTLFNALLNNENFKEVDFSALKLSVGGGMAIQQSVATRWHELTGCNIIEGYGMTECSPLIAACPINVVKHNGTIGVPVPNTDIKIIKDDGSDAKIGEAGELWVKGDQVMRGYWQRPEATSEVLKDGWMATGDIVIMDESYSLRIVDRKKDIILVSGFNVYPNEIEDVVMLNYKVSEAVAIGVPHAVSGETIKIFVVKKDDSLTRDELRNHCRQYLTGYKVPKEIEFRDELPKTNVGKILRRVLRDEEIAKRPKH.

Belongs to the ATP-dependent AMP-binding enzyme family. Mg(2+) is required as a cofactor.

Its subcellular location is the membrane. The enzyme catalyses a long-chain fatty acid + ATP + CoA = a long-chain fatty acyl-CoA + AMP + diphosphate. It functions in the pathway lipid metabolism; fatty acid beta-oxidation. Functionally, catalyzes the esterification, concomitant with transport, of exogenous long-chain fatty acids into metabolically active CoA thioesters for subsequent degradation or incorporation into phospholipids. The chain is Long-chain-fatty-acid--CoA ligase (fadD) from Haemophilus influenzae (strain ATCC 51907 / DSM 11121 / KW20 / Rd).